Consider the following 257-residue polypeptide: Asnovolin H dehydrogenase nvfC (257 aa).

The chain crosses the membrane as a helical span at residues 7–26 (YVLIITGSASGIGLATATIA). NADP(+) is bound at residue isoleucine 11. 3 N-linked (GlcNAc...) asparagine glycosylation sites follow: asparagine 57, asparagine 92, and asparagine 110. NADP(+) is bound by residues arginine 119, tyrosine 151, lysine 155, and valine 184. Tyrosine 151 (proton donor) is an active-site residue. The active-site Lowers pKa of active site Tyr is lysine 155.

Belongs to the short-chain dehydrogenases/reductases (SDR) family.

The protein localises to the membrane. It carries out the reaction asnovolin H + A = chermesin D + AH2. Its pathway is secondary metabolite biosynthesis; terpenoid biosynthesis. Its function is as follows. Short chain dehydrogenase; part of the gene cluster that mediates the biosynthesis of novofumigatonin, a heavily oxygenated meroterpenoid containing a unique orthoester moiety. The first step of the pathway is the synthesis of 3,5-dimethylorsellinic acid (DMOA) by the polyketide synthase nvfA via condensation of one acetyl-CoA starter unit with 3 malonyl-CoA units and 2 methylations. DMOA is then converted to farnesyl-DMOA by the farnesyltransferase nvfB. Epoxydation by FAD-dependent monooxygenase nvfK, followed by a protonation-initiated cyclization catalyzed by the terpene cyclase nvfL leads to the production of asnavolin H. The short chain dehydrogenase nvfC then as a 3-OH dehydrogenase of asnovolin H to yield chemesin D. There are two branches to synthesize asnovolin A from chemesin D. In one branch, chemesin D undergoes Baeyer-Villiger oxidation by nvfH, methylation by nvfJ, and enoyl reduction by the nvfM D enoylreductase that reduces the double bond between C-5'and C-6', to form respectively asnovolin I, asnovolin K, and asnovolin A. In the other branch, the methylation precedes the Baeyer-Villiger oxidation and the enoyl reduction to yield asnovolin A via the asnovolin J intermediate. Asnovolin A is further converted to fumigatonoid A by the Fe(II)/2-oxoglutarate-dependent dioxygenase nvfI that catalyzes an endoperoxidation reaction. The alpha/beta hydrolase nvfD then acts as an epimerase that converts fumigatonoid A to its C-5' epimer, which then undergoes spontaneous or nvfD-catalyzed lactonization. The following step utilizes the ketoreductase nvfG to produce fumigatonoid B. The dioxygenase nvfE further converts fumigatonoid B into fumigatonoid C. Finally the Fe(II)/2-oxoglutarate-dependent dioxygenase nvfF catalyzes two rounds of oxidation to transform fumigatonoid C into the end product, novofumigatonin A. The polypeptide is Asnovolin H dehydrogenase nvfC (Aspergillus novofumigatus (strain IBT 16806)).